A 224-amino-acid chain; its full sequence is 7-cyano-7-deazaguanine synthase (224 aa).

Residue 8-18 coordinates ATP; the sequence is LSGGMDSAAVI. The Zn(2+) site is built by cysteine 186, cysteine 196, cysteine 199, and cysteine 202.

Belongs to the QueC family. The cofactor is Zn(2+).

It catalyses the reaction 7-carboxy-7-deazaguanine + NH4(+) + ATP = 7-cyano-7-deazaguanine + ADP + phosphate + H2O + H(+). It participates in purine metabolism; 7-cyano-7-deazaguanine biosynthesis. Its function is as follows. Catalyzes the ATP-dependent conversion of 7-carboxy-7-deazaguanine (CDG) to 7-cyano-7-deazaguanine (preQ(0)). The sequence is that of 7-cyano-7-deazaguanine synthase from Xanthomonas campestris pv. campestris (strain 8004).